We begin with the raw amino-acid sequence, 232 residues long: Sugar fermentation stimulation protein homolog (232 aa).

It belongs to the SfsA family.

In Pelagibacter ubique (strain HTCC1062), this protein is Sugar fermentation stimulation protein homolog.